Here is a 159-residue protein sequence, read N- to C-terminus: Ribosome maturation factor RimP (159 aa).

This sequence belongs to the RimP family.

The protein localises to the cytoplasm. Required for maturation of 30S ribosomal subunits. The protein is Ribosome maturation factor RimP of Trichlorobacter lovleyi (strain ATCC BAA-1151 / DSM 17278 / SZ) (Geobacter lovleyi).